A 965-amino-acid polypeptide reads, in one-letter code: Iron-responsive element-binding protein 2 (965 aa).

The interval 142 to 170 (NAPNPGGGEAQKPTAKLSPLKGQPRKLPC) is disordered. Cys-514, Cys-580, and Cys-583 together coordinate [4Fe-4S] cluster.

Belongs to the aconitase/IPM isomerase family. The cofactor is [4Fe-4S] cluster. Ubiquitinated and degraded by the proteasome in presence of high level of iron and oxygen.

It localises to the cytoplasm. Its function is as follows. RNA-binding protein that binds to iron-responsive elements (IRES), which are stem-loop structures found in the 5'-UTR of ferritin, and delta aminolevulinic acid synthase mRNAs, and in the 3'-UTR of transferrin receptor mRNA. Binding to the IRE element in ferritin results in the repression of its mRNA translation. Binding of the protein to the transferrin receptor mRNA inhibits the degradation of this otherwise rapidly degraded mRNA. This is Iron-responsive element-binding protein 2 (IREB2) from Gallus gallus (Chicken).